A 317-amino-acid chain; its full sequence is Porphobilinogen deaminase (317 aa).

S-(dipyrrolylmethanemethyl)cysteine is present on C245.

Belongs to the HMBS family. As to quaternary structure, monomer. Dipyrromethane is required as a cofactor.

It carries out the reaction 4 porphobilinogen + H2O = hydroxymethylbilane + 4 NH4(+). Its pathway is porphyrin-containing compound metabolism; protoporphyrin-IX biosynthesis; coproporphyrinogen-III from 5-aminolevulinate: step 2/4. The protein operates within porphyrin-containing compound metabolism; chlorophyll biosynthesis. In terms of biological role, tetrapolymerization of the monopyrrole PBG into the hydroxymethylbilane pre-uroporphyrinogen in several discrete steps. This chain is Porphobilinogen deaminase, found in Synechococcus sp. (strain RCC307).